Here is a 445-residue protein sequence, read N- to C-terminus: Tubulin beta-3 chain (445 aa).

The short motif at 1-4 is the MREI motif element; the sequence is MREI. Residues Gln11, Glu69, Ser138, Gly142, Thr143, Gly144, Asn204, and Asn226 each coordinate GTP. Glu69 provides a ligand contact to Mg(2+). Residues 425 to 445 are disordered; sequence YQDATAEEEGEFEEEAEEEAE. The segment covering 429–445 has biased composition (acidic residues); it reads TAEEEGEFEEEAEEEAE. Glu438 is subject to 5-glutamyl polyglutamate.

It belongs to the tubulin family. Dimer of alpha and beta chains. A typical microtubule is a hollow water-filled tube with an outer diameter of 25 nm and an inner diameter of 15 nM. Alpha-beta heterodimers associate head-to-tail to form protofilaments running lengthwise along the microtubule wall with the beta-tubulin subunit facing the microtubule plus end conferring a structural polarity. Microtubules usually have 13 protofilaments but different protofilament numbers can be found in some organisms and specialized cells. Mg(2+) is required as a cofactor. Post-translationally, some glutamate residues at the C-terminus are polyglycylated, resulting in polyglycine chains on the gamma-carboxyl group. Glycylation is mainly limited to tubulin incorporated into axonemes (cilia and flagella) whereas glutamylation is prevalent in neuronal cells, centrioles, axonemes, and the mitotic spindle. Both modifications can coexist on the same protein on adjacent residues, and lowering polyglycylation levels increases polyglutamylation, and reciprocally. The precise function of polyglycylation is still unclear. Some glutamate residues at the C-terminus are polyglutamylated, resulting in polyglutamate chains on the gamma-carboxyl group. Polyglutamylation plays a key role in microtubule severing by spastin (SPAST). SPAST preferentially recognizes and acts on microtubules decorated with short polyglutamate tails: severing activity by SPAST increases as the number of glutamates per tubulin rises from one to eight, but decreases beyond this glutamylation threshold. In terms of tissue distribution, highly expressed in testis.

Its subcellular location is the cytoplasm. It is found in the cytoskeleton. In terms of biological role, tubulin is the major constituent of microtubules, a cylinder consisting of laterally associated linear protofilaments composed of alpha- and beta-tubulin heterodimers. Microtubules grow by the addition of GTP-tubulin dimers to the microtubule end, where a stabilizing cap forms. Below the cap, tubulin dimers are in GDP-bound state, owing to GTPase activity of alpha-tubulin. TUBB3 plays a role in dorsal root ganglion axon projection towards the spinal cord. This Gallus gallus (Chicken) protein is Tubulin beta-3 chain.